The following is a 127-amino-acid chain: Fluoride-specific ion channel FluC (127 aa).

The next 4 helical transmembrane spans lie at 4–24 (LLLA…LLSM), 35–55 (LGTL…FAWF), 71–91 (TGFC…VFLL), and 103–123 (VFVN…LFSA). Positions 75 and 78 each coordinate Na(+).

Belongs to the fluoride channel Fluc/FEX (TC 1.A.43) family.

It localises to the cell inner membrane. The enzyme catalyses fluoride(in) = fluoride(out). Its activity is regulated as follows. Na(+) is not transported, but it plays an essential structural role and its presence is essential for fluoride channel function. Its function is as follows. Fluoride-specific ion channel. Important for reducing fluoride concentration in the cell, thus reducing its toxicity. The protein is Fluoride-specific ion channel FluC of Escherichia coli O8 (strain IAI1).